We begin with the raw amino-acid sequence, 314 residues long: Putative S-adenosyl-L-methionine-dependent methyltransferase MRA_3805 (314 aa).

S-adenosyl-L-methionine is bound by residues Asp132 and 161–162 (DL).

Belongs to the UPF0677 family.

In terms of biological role, exhibits S-adenosyl-L-methionine-dependent methyltransferase activity. In Mycobacterium tuberculosis (strain ATCC 25177 / H37Ra), this protein is Putative S-adenosyl-L-methionine-dependent methyltransferase MRA_3805.